A 309-amino-acid chain; its full sequence is Olfactory receptor 1A1 (309 aa).

The Extracellular portion of the chain corresponds to 1 to 25 (MRENNQSSTLEFILLGVTGQQEQED). Asn-5 carries an N-linked (GlcNAc...) asparagine glycan. A helical membrane pass occupies residues 26–49 (FFYILFLFIYPITLIGNLLIVLAI). Topologically, residues 50–57 (CSDVRLHN) are cytoplasmic. The chain crosses the membrane as a helical span at residues 58–79 (PMYFLLANLSLVDIFFSSVTIP). Residues 80–100 (KMLANHLLGSKSISFGGCLTQ) lie on the Extracellular side of the membrane. Cysteines 97 and 189 form a disulfide. Residues 101–120 (MYFMIALGNTDSYILAAMAY) form a helical membrane-spanning segment. Topologically, residues 121–139 (DRAVAISRPLHYTTIMSPR) are cytoplasmic. A helical transmembrane segment spans residues 140–158 (SCIWLIAGSWVIGNANALP). The Extracellular portion of the chain corresponds to 159 to 195 (HTLLTASLSFCGNQEVANFYCDITPLLKLSCSDIHFH). Residues 196–218 (VKMMYLGVGIFSVPLLCIIVSYI) form a helical membrane-spanning segment. Residues 219-235 (RVFSTVFQVPSTKGVLK) lie on the Cytoplasmic side of the membrane. Residues 236 to 258 (AFSTCGSHLTVVSLYYGTVMGTY) form a helical membrane-spanning segment. Residues 259–270 (FRPLTNYSLKDA) are Extracellular-facing. Residue Asn-264 is glycosylated (N-linked (GlcNAc...) asparagine). The chain crosses the membrane as a helical span at residues 271–290 (VITVMYTAVTPMLNPFIYSL). The Cytoplasmic portion of the chain corresponds to 291 to 309 (RNRDMKAALRKLFNKRISS).

It belongs to the G-protein coupled receptor 1 family.

The protein resides in the cell membrane. Odorant receptor. This chain is Olfactory receptor 1A1 (OR1A1), found in Homo sapiens (Human).